Consider the following 67-residue polypeptide: Conotoxin reg3.8 (67 aa).

The signal sequence occupies residues 1–22; the sequence is MMSKLGVLLTICLLLFPLSVLP. The propeptide occupies 23-50; sequence LDGDQLADQPARHAQSAERNARFHPVKR. 3 disulfide bridges follow: C51/C65, C52/C63, and C57/C66. C66 is modified (cysteine amide).

This sequence belongs to the conotoxin M superfamily. As to expression, expressed by the venom duct.

The protein resides in the secreted. The sequence is that of Conotoxin reg3.8 from Conus regius (Crown cone).